The following is a 216-amino-acid chain: Protein Syd (216 aa).

This sequence belongs to the Syd family.

Its subcellular location is the cell inner membrane. In terms of biological role, interacts with the SecY protein in vivo. May bind preferentially to an uncomplexed state of SecY, thus functioning either as a chelating agent for excess SecY in the cell or as a regulatory factor that negatively controls the translocase function. The sequence is that of Protein Syd from Shewanella baltica (strain OS223).